Here is a 218-residue protein sequence, read N- to C-terminus: N-(5'-phosphoribosyl)anthranilate isomerase (218 aa).

It belongs to the TrpF family.

The catalysed reaction is N-(5-phospho-beta-D-ribosyl)anthranilate = 1-(2-carboxyphenylamino)-1-deoxy-D-ribulose 5-phosphate. Its pathway is amino-acid biosynthesis; L-tryptophan biosynthesis; L-tryptophan from chorismate: step 3/5. The sequence is that of N-(5'-phosphoribosyl)anthranilate isomerase from Bordetella pertussis (strain Tohama I / ATCC BAA-589 / NCTC 13251).